The chain runs to 218 residues: Probable transaldolase 2 (218 aa).

Residue Lys83 is the Schiff-base intermediate with substrate of the active site.

The protein belongs to the transaldolase family. Type 3B subfamily.

The protein localises to the cytoplasm. The catalysed reaction is D-sedoheptulose 7-phosphate + D-glyceraldehyde 3-phosphate = D-erythrose 4-phosphate + beta-D-fructose 6-phosphate. It functions in the pathway carbohydrate degradation; pentose phosphate pathway; D-glyceraldehyde 3-phosphate and beta-D-fructose 6-phosphate from D-ribose 5-phosphate and D-xylulose 5-phosphate (non-oxidative stage): step 2/3. In terms of biological role, transaldolase is important for the balance of metabolites in the pentose-phosphate pathway. This is Probable transaldolase 2 from Listeria innocua serovar 6a (strain ATCC BAA-680 / CLIP 11262).